A 643-amino-acid polypeptide reads, in one-letter code: 1-deoxy-D-xylulose-5-phosphate synthase (643 aa).

Residues His78 and 119–121 (AHS) contribute to the thiamine diphosphate site. Residue Asp150 participates in Mg(2+) binding. Thiamine diphosphate is bound by residues 151–152 (GS), Asn179, Tyr288, and Glu370. Asn179 provides a ligand contact to Mg(2+).

The protein belongs to the transketolase family. DXPS subfamily. In terms of assembly, homodimer. Requires Mg(2+) as cofactor. It depends on thiamine diphosphate as a cofactor.

The catalysed reaction is D-glyceraldehyde 3-phosphate + pyruvate + H(+) = 1-deoxy-D-xylulose 5-phosphate + CO2. Its pathway is metabolic intermediate biosynthesis; 1-deoxy-D-xylulose 5-phosphate biosynthesis; 1-deoxy-D-xylulose 5-phosphate from D-glyceraldehyde 3-phosphate and pyruvate: step 1/1. In terms of biological role, catalyzes the acyloin condensation reaction between C atoms 2 and 3 of pyruvate and glyceraldehyde 3-phosphate to yield 1-deoxy-D-xylulose-5-phosphate (DXP). The protein is 1-deoxy-D-xylulose-5-phosphate synthase of Brucella ovis (strain ATCC 25840 / 63/290 / NCTC 10512).